Consider the following 259-residue polypeptide: Coenzyme F420 hydrogenase subunit gamma (259 aa).

4Fe-4S ferredoxin-type domains follow at residues 180–208 (MYDV…TLEF) and 209–238 (GKPQ…LDVI). The [4Fe-4S] cluster site is built by C189, C192, C195, C199, C218, C221, C224, and C228.

Belongs to the FrhG family. In terms of assembly, pentamer of two alpha chains, two beta chains and a gamma chain. It depends on Ni(2+) as a cofactor. Iron-sulfur cluster is required as a cofactor. The cofactor is FAD.

The enzyme catalyses oxidized coenzyme F420-(gamma-L-Glu)(n) + H2 + H(+) = reduced coenzyme F420-(gamma-L-Glu)(n). In terms of biological role, reduces the physiological low-potential two-electron acceptor coenzyme F420, and the artificial one-electron acceptor methylviologen. The polypeptide is Coenzyme F420 hydrogenase subunit gamma (frhG) (Methanosarcina barkeri (strain Fusaro / DSM 804)).